A 498-amino-acid chain; its full sequence is ATP synthase subunit beta, chloroplastic (498 aa).

Position 172-179 (G172–T179) interacts with ATP.

Belongs to the ATPase alpha/beta chains family. In terms of assembly, F-type ATPases have 2 components, CF(1) - the catalytic core - and CF(0) - the membrane proton channel. CF(1) has five subunits: alpha(3), beta(3), gamma(1), delta(1), epsilon(1). CF(0) has four main subunits: a(1), b(1), b'(1) and c(9-12).

It localises to the plastid. Its subcellular location is the chloroplast thylakoid membrane. It carries out the reaction ATP + H2O + 4 H(+)(in) = ADP + phosphate + 5 H(+)(out). Produces ATP from ADP in the presence of a proton gradient across the membrane. The catalytic sites are hosted primarily by the beta subunits. This chain is ATP synthase subunit beta, chloroplastic, found in Carica papaya (Papaya).